The following is a 553-amino-acid chain: Transcriptional regulator HilA (553 aa).

A DNA-binding region (ompR/PhoB-type) is located at residues 11–107; the sequence is NKKFVFDDFI…LYGQGYRFNR (97 aa). The residue at position 62 (D62) is a 4-aspartylphosphate. The TPR repeat unit spans residues 372 to 405; that stretch reads ADIKYYYGWNLFMAGQLEEALQTINECLKLDPTR.

In terms of biological role, the main transcriptional regulator of the Salmonella pathogenicity island 1 (SPI1) gene expression. Activates the expression of invasion genes by a direct action at their promoters and also indirectly by increasing the level of InvF. Also binds upstream of prgH and directly activates the expression of prgHIJK operon. The chain is Transcriptional regulator HilA (hilA) from Salmonella typhimurium (strain LT2 / SGSC1412 / ATCC 700720).